The primary structure comprises 153 residues: Ribosome maturation factor RimP (153 aa).

Belongs to the RimP family.

The protein localises to the cytoplasm. Functionally, required for maturation of 30S ribosomal subunits. The polypeptide is Ribosome maturation factor RimP (Burkholderia mallei (strain NCTC 10229)).